Consider the following 122-residue polypeptide: Double-headed protease inhibitor, submandibular gland (122 aa).

Kazal-like domains lie at glycine 10–isoleucine 70 and glutamate 71–serine 121. 6 cysteine pairs are disulfide-bonded: cysteine 16–cysteine 50, cysteine 28–cysteine 47, cysteine 36–cysteine 68, cysteine 72–cysteine 101, cysteine 79–cysteine 98, and cysteine 87–cysteine 119.

Its subcellular location is the secreted. Functionally, this inhibitor is composed of two homologous actively inhibiting halves: one which inhibits trypsin, the other which inhibits elastase. The chain is Double-headed protease inhibitor, submandibular gland from Panthera uncia (Snow leopard).